A 474-amino-acid polypeptide reads, in one-letter code: Solute carrier family 49 member A3 (474 aa).

The interval 1–20 (MEGESAETEPLIQSSSAADR) is disordered. The next 12 membrane-spanning stretches (helical) occupy residues 38-58 (WFIL…WLTF), 69-89 (LCVS…AAVV), 105-126 (CSLI…CGVL), 134-154 (VFAV…LVIF), 175-195 (LASM…PLIV), 201-221 (LFLL…LATL), 258-278 (WILL…STLL), 290-310 (GFAG…AFLL), 326-346 (ICMC…QLPA), 349-369 (VLLV…YPVG), 388-408 (LIFT…QALA), and 428-448 (VPVL…VVFF).

It belongs to the major facilitator superfamily.

The protein resides in the membrane. This is Solute carrier family 49 member A3 (slc49a3) from Danio rerio (Zebrafish).